We begin with the raw amino-acid sequence, 174 residues long: Small ribosomal subunit protein uS5 (174 aa).

The region spanning 16–79 (FSELIVSVRR…NAAKKNMIRV (64 aa)) is the S5 DRBM domain.

Belongs to the universal ribosomal protein uS5 family. As to quaternary structure, part of the 30S ribosomal subunit. Contacts proteins S4 and S8.

Functionally, with S4 and S12 plays an important role in translational accuracy. Located at the back of the 30S subunit body where it stabilizes the conformation of the head with respect to the body. In Ehrlichia canis (strain Jake), this protein is Small ribosomal subunit protein uS5.